We begin with the raw amino-acid sequence, 350 residues long: Phenylalanine--tRNA ligase alpha subunit (350 aa).

A Mg(2+)-binding site is contributed by E271.

Belongs to the class-II aminoacyl-tRNA synthetase family. Phe-tRNA synthetase alpha subunit type 1 subfamily. In terms of assembly, tetramer of two alpha and two beta subunits. It depends on Mg(2+) as a cofactor.

Its subcellular location is the cytoplasm. The catalysed reaction is tRNA(Phe) + L-phenylalanine + ATP = L-phenylalanyl-tRNA(Phe) + AMP + diphosphate + H(+). This chain is Phenylalanine--tRNA ligase alpha subunit, found in Acidovorax ebreus (strain TPSY) (Diaphorobacter sp. (strain TPSY)).